A 111-amino-acid chain; its full sequence is Latartoxin-2b (111 aa).

The first 19 residues, 1–19, serve as a signal peptide directing secretion; the sequence is MKVLVIIALCFFILQTALS. A propeptide spans 20–43 (removed in mature form); that stretch reads EDKYESFESYVEDLKSGNMKGEAR. The Processing quadruplet motif signature appears at 40–43; it reads GEAR. Intrachain disulfides connect cysteine 45–cysteine 62, cysteine 52–cysteine 73, cysteine 61–cysteine 87, cysteine 75–cysteine 85, and cysteine 78–cysteine 99. Valine 110 is modified (valine amide).

The protein belongs to the neurotoxin 19 (CSTX) family. 11 (latartoxin) subfamily. Contains 5 disulfide bonds. In terms of processing, cleavage of the propeptide depends on the processing quadruplet motif (XXXR, with at least one of X being E). In terms of tissue distribution, expressed by the venom gland.

The protein localises to the secreted. Insect toxin. This is Latartoxin-2b from Lachesana tarabaevi (Spider).